The primary structure comprises 694 residues: Follicle-stimulating hormone receptor (694 aa).

Residues 1-17 form the signal peptide; the sequence is MALLLVSLLAFLGSGAG. 2 disulfides stabilise this stretch: Cys-18-Cys-25 and Cys-23-Cys-32. Positions 18-46 constitute an LRRNT domain; that stretch reads CHHWLCHCSDRVFLCQDSKVTEIPPDLPR. The Extracellular portion of the chain corresponds to 18 to 365; sequence CHHWLCHCSD…EDIMGYNILR (348 aa). LRR repeat units lie at residues 49 to 72, 73 to 97, 98 to 118, 119 to 143, 144 to 169, 170 to 192, 193 to 216, 217 to 240, and 241 to 259; these read IELRFVLTKLRVIPQGSFSGFKDL, EKIEISQNDVLEVIEADVFSNLPKL, HEIRIERANTLLYINPEAFQN, LPNLRYLLISNTGIKHLPVVHKIQS, LQKVLLDIQDNINLHTIARNSFMGLS, FDSLILWLNKNGIQEIHNCAFNG, TQLDELNLSDNNNLEELPNDVFRG, ASGPVILDISRTKVHSLPSHGLEN, and LKKLRARSTYSLKKLPSLD. 2 N-linked (GlcNAc...) asparagine glycosylation sites follow: Asn-191 and Asn-199. Disulfide bonds link Cys-275–Cys-345, Cys-276–Cys-292, Cys-276–Cys-355, and Cys-292–Cys-337. Residues Asn-293 and Asn-311 are each glycosylated (N-linked (GlcNAc...) asparagine). Residues 366 to 386 form a helical membrane-spanning segment; sequence VLIWFISILAITGNITVLVIL. At 387-397 the chain is on the cytoplasmic side; that stretch reads TTSQYKLTVPR. A helical transmembrane segment spans residues 398–420; sequence FLMCNLAFADLCIGIYLLPIASV. At 421-442 the chain is on the extracellular side; it reads DIHTKSQYHNYAIDWQTAVGCD. Cys-441 and Cys-516 are disulfide-bonded. The chain crosses the membrane as a helical span at residues 443-464; sequence AAGFFTAFASELSVYTLTAIPL. Residues 465-484 lie on the Cytoplasmic side of the membrane; it reads ERWHTITHAMQLERKVQLRH. Residues 485 to 507 form a helical membrane-spanning segment; the sequence is AASVMVMGWVFAFAAALLPIFGV. Over 508–527 the chain is Extracellular; sequence SSYMKVSICLPIDIDSPLSQ. The chain crosses the membrane as a helical span at residues 528 to 549; the sequence is LYVMALLVLNVLAFVVICGCYT. At 550–572 the chain is on the cytoplasmic side; that stretch reads HIYLTVRNPNIVSSSSDTKIAKR. A helical transmembrane segment spans residues 573–596; it reads MATLIFTDFLCMAPISLFAISASL. Over 597 to 607 the chain is Extracellular; it reads KAPLITVSKAK. A helical transmembrane segment spans residues 608-629; that stretch reads ILLVLFYPINSCANPFLYAIFT. The Cytoplasmic portion of the chain corresponds to 630-694; it reads KNFRRDFFIL…LVPLSQSAHN (65 aa).

This sequence belongs to the G-protein coupled receptor 1 family. FSH/LSH/TSH subfamily. In terms of assembly, homotrimer. Functions as a homotrimer binding the FSH hormone heterodimer composed of CGA and FSHB. Interacts with ARRB2. Interacts with APPL2; interaction is independent of follicle stimulating hormone stimulation. N-glycosylated; indirectly required for FSH-binding, possibly via a conformational change that allows high affinity binding of hormone.

It localises to the cell membrane. Functionally, g protein-coupled receptor for follitropin, the follicle-stimulating hormone. Through cAMP production activates the downstream PI3K-AKT and ERK1/ERK2 signaling pathways. The sequence is that of Follicle-stimulating hormone receptor (FSHR) from Mesocricetus auratus (Golden hamster).